A 73-amino-acid chain; its full sequence is Dipeptidyl peptidase 3 (73 aa).

It belongs to the peptidase M49 family. Requires Zn(2+) as cofactor.

The protein localises to the membrane. It catalyses the reaction Release of an N-terminal dipeptide from a peptide comprising four or more residues, with broad specificity. Also acts on dipeptidyl 2-naphthylamides.. Its function is as follows. Degrades neuropeptide proctolin (RYLPT) by cleavage between Tyr and Leu residues. This chain is Dipeptidyl peptidase 3, found in Blaberus craniifer (Death's head cockroach).